We begin with the raw amino-acid sequence, 1295 residues long: Phosphoribosylformylglycinamidine synthase (1295 aa).

The segment at 305-327 (WPGAATGSGGEIRDEGATGRGAK) is disordered. Residues 307–318 (GAATGSGGEIRD), 386–388 (TGY), and alanine 678 each bind ATP. Mg(2+) is bound by residues aspartate 679, glutamate 718, asparagine 722, and aspartate 884. An ATP-binding site is contributed by serine 886. The 255-residue stretch at 1041–1295 (KVAVLREQGG…IFRNARKQLG (255 aa)) folds into the Glutamine amidotransferase type-1 domain. Cysteine 1135 functions as the Nucleophile in the catalytic mechanism. Residues histidine 1260 and glutamate 1262 contribute to the active site.

This sequence in the N-terminal section; belongs to the FGAMS family. In terms of assembly, monomer.

The protein localises to the cytoplasm. The catalysed reaction is N(2)-formyl-N(1)-(5-phospho-beta-D-ribosyl)glycinamide + L-glutamine + ATP + H2O = 2-formamido-N(1)-(5-O-phospho-beta-D-ribosyl)acetamidine + L-glutamate + ADP + phosphate + H(+). The protein operates within purine metabolism; IMP biosynthesis via de novo pathway; 5-amino-1-(5-phospho-D-ribosyl)imidazole from N(2)-formyl-N(1)-(5-phospho-D-ribosyl)glycinamide: step 1/2. Functionally, phosphoribosylformylglycinamidine synthase involved in the purines biosynthetic pathway. Catalyzes the ATP-dependent conversion of formylglycinamide ribonucleotide (FGAR) and glutamine to yield formylglycinamidine ribonucleotide (FGAM) and glutamate. This is Phosphoribosylformylglycinamidine synthase from Salmonella choleraesuis (strain SC-B67).